We begin with the raw amino-acid sequence, 483 residues long: Transmembrane protein 39B (483 aa).

Residue Asn9 is glycosylated (N-linked (GlcNAc...) asparagine). A run of 7 helical transmembrane segments spans residues 76–96 (HLLF…VHYI), 114–134 (TSLN…IVLA), 158–182 (LLVA…ILLF), 187–207 (FFNL…LQLG), 281–301 (EVLL…VWFV), 414–434 (VLNI…YSLL), and 440–460 (HHTI…FKLL).

The protein belongs to the TMEM39 family.

It is found in the endoplasmic reticulum membrane. Its function is as follows. May protect the cells against DNA damage caused by exposure to the cold-warming stress and facilitates tissue damage repair during the recovery phase. This chain is Transmembrane protein 39B, found in Xenopus tropicalis (Western clawed frog).